Here is a 721-residue protein sequence, read N- to C-terminus: mRNA (2'-O-methyladenosine-N(6)-)-methyltransferase (721 aa).

Polar residues-rich tracts occupy residues 1–10 and 19–36; these read MTSENHTTIK and PTGS…TSKP. Residues 1–37 form a disordered region; the sequence is MTSENHTTIKADSALVMSPTGSTSQAAPFSPSTSKPI. The WW domain maps to 43–77; that stretch reads ELIQAGWSKCWSKRENRPYYFNRFTNQSLWEMPVL. A disordered region spans residues 93-170; that stretch reads PASGEANADA…KQGQASTPAP (78 aa). Low complexity predominate over residues 132–148; sequence IPATPTTPTVPISPSTP. Substrate contacts are provided by Arg239 and Arg269. S-adenosyl-L-methionine is bound at residue 558–561; sequence NPPF. Residues Glu563 and 593–597 contribute to the substrate site; that span reads WRDPP. Position 619-621 (619-621) interacts with S-adenosyl-L-methionine; that stretch reads FEH. Residues 675 to 686 are compositionally biased toward low complexity; the sequence is SGRSLPSPGPSS. The interval 675–721 is disordered; that stretch reads SGRSLPSPGPSSTNTGEKDSKPAPERTAPSQDNSSPVDKTAQDTTNT. Residues 702 to 721 are compositionally biased toward polar residues; that stretch reads APSQDNSSPVDKTAQDTTNT.

It belongs to the CAPAM family.

It localises to the nucleus. The enzyme catalyses a 5'-end (N(7)-methyl 5'-triphosphoguanosine)-(2'-O-methyladenosine) in mRNA + S-adenosyl-L-methionine = a 5'-end (N(7)-methyl 5'-triphosphoguanosine)-(N(6),2'-O-dimethyladenosine) in mRNA + S-adenosyl-L-homocysteine + H(+). With respect to regulation, cap-specific adenosine methyltransferase activity is inhibited by zinc. Its function is as follows. Cap-specific adenosine methyltransferase that catalyzes formation of N(6),2'-O-dimethyladenosine cap (m6A(m)) by methylating the adenosine at the second transcribed position of capped mRNAs. In Danio rerio (Zebrafish), this protein is mRNA (2'-O-methyladenosine-N(6)-)-methyltransferase (pcif1).